The following is a 379-amino-acid chain: MKKKTLMIHGGITGDEKTGAVSVPIYQVSTYKQPKAGQHTGYEYSRTANPTRTALEALVTELESGEAGYAFSSGMAAITAVMMLFNSGDHVVLTDDVYGGTYRVMTKVLNRLGIESTFVDTSSREEVEKAIRPNTKAIYIETPTNPLLKITDLTLMADIAKKAGVLLIVDNTFNTPYFQQPLTLGADIVLHSATKYLGGHSDVVGGLVVTASKELGEELHFVQNSTGGVLGPQDSWLLMRGIKTLGLRMEAIDQNARKIASFLENHPAVQTLYYPGSSNHPGHELAKTQGAGFGGMISFDIGSEERVDAFLGNLKLFTIAESLGAVESLISVPARMTHASIPRERRLELGITDGLIRISVGIEDAEDLLEDIGQALENI.

N6-(pyridoxal phosphate)lysine is present on Lys-195.

This sequence belongs to the trans-sulfuration enzymes family. It depends on pyridoxal 5'-phosphate as a cofactor.

The enzyme catalyses L,L-cystathionine + H2O = 2-oxobutanoate + L-cysteine + NH4(+). It catalyses the reaction L-homocysteine + H2O = 2-oxobutanoate + hydrogen sulfide + NH4(+) + H(+). Catalyzes the conversion of cystathionine to cysteine, and homocysteine to sulfide. This chain is Cystathionine gamma-lyase (mccB), found in Bacillus subtilis (strain 168).